Reading from the N-terminus, the 457-residue chain is Neuropeptide receptor npr-1 (457 aa).

Topologically, residues 1–22 are extracellular; it reads MEVENFTDCQVYWKVYPDPSQS. A helical membrane pass occupies residues 23–43; sequence IYAIVPFLTVYLFLFFLGLFG. Over 44–62 the chain is Cytoplasmic; that stretch reads NVTLIYVTCSHKALLSVQN. A helical membrane pass occupies residues 63-83; it reads IFILNLAASDCMMCILSLPIT. Residues 84–100 lie on the Extracellular side of the membrane; that stretch reads PITNVYKNWYFGNLLCH. Cysteines 99 and 178 form a disulfide. The chain crosses the membrane as a helical span at residues 101–121; it reads LIPCIQGISIFVCTFSLGAIA. Topologically, residues 122 to 140 are cytoplasmic; sequence LDRYILVVRPHSTPLSQRG. Residues 141-161 traverse the membrane as a helical segment; the sequence is AFLTTVLLWILSFVVTLPYAF. At 162–193 the chain is on the extracellular side; sequence NMQMIEYTEERICGYFCTEKWESAKSRRAYTM. Residues 194 to 214 traverse the membrane as a helical segment; the sequence is IVMLAQFVVPFAVMAFCYANI. The Cytoplasmic portion of the chain corresponds to 215–279; it reads VSVLSKRAQT…LQNRRTTSIL (65 aa). Residues 280–300 traverse the membrane as a helical segment; it reads VTMVVWFGITWLPHNVISLII. Residues 301-324 are Extracellular-facing; that stretch reads EYDDTQSFFRLYGRDDYDISYLLN. A helical transmembrane segment spans residues 325 to 345; it reads LFTHSIAMSNNVLNPVLYAWL. At 346–457 the chain is on the cytoplasmic side; the sequence is NPSFRQLVIK…IEFSVNDTLV (112 aa).

Belongs to the G-protein coupled receptor 1 family. Expressed in neurons, including neurons in the head, the ventral nerve cord, and the preanal ganglion.

It is found in the membrane. Functionally, G-protein coupled receptor for FARP(FMRFamide related peptide) neuropeptides. Activated by FARP neuropeptides flp-18 and flp-21. Plays a role in modulating social and feeding behavior. Required to modulate locomotion quiescence during the sleep-like state called lethargus, which occurs during molting between larval and adult stages, in part by regulating touch sensitivity. The polypeptide is Neuropeptide receptor npr-1 (Caenorhabditis elegans).